Consider the following 144-residue polypeptide: Large ribosomal subunit protein uL11 (144 aa).

This sequence belongs to the universal ribosomal protein uL11 family. In terms of assembly, part of the ribosomal stalk of the 50S ribosomal subunit. Interacts with L10 and the large rRNA to form the base of the stalk. L10 forms an elongated spine to which L12 dimers bind in a sequential fashion forming a multimeric L10(L12)X complex. One or more lysine residues are methylated.

In terms of biological role, forms part of the ribosomal stalk which helps the ribosome interact with GTP-bound translation factors. This chain is Large ribosomal subunit protein uL11, found in Deinococcus deserti (strain DSM 17065 / CIP 109153 / LMG 22923 / VCD115).